A 338-amino-acid polypeptide reads, in one-letter code: Sulfotransferase 2B1 (338 aa).

Residue 67–72 participates in 3'-phosphoadenylyl sulfate binding; it reads KSGTNW. The substrate site is built by W95 and W100. H122 functions as the Proton acceptor in the catalytic mechanism. 3'-phosphoadenylyl sulfate-binding positions include R144, S152, Y207, 241-246, and 271-273; these read SAFAAM and RKG. Residues 301-338 are disordered; the sequence is VQRFPWDTSEEDSSPDGQPDPEPSPSPASDDPNPGSSQ. Residues 327 to 338 show a composition bias toward low complexity; that stretch reads PASDDPNPGSSQ.

This sequence belongs to the sulfotransferase 1 family. Expressed at high levels in epididymis, intestine and uterus, and low levels in brain and hypothalamus. Isoform 2 is most prominent in the brain and spinal cord, with modest expression in the lung, skin and spleen. Isoform 1 is most prominently expressed in skin and small intestine, with modest expression in muscle and prostate.

The protein localises to the cytoplasm. The protein resides in the cytosol. It is found in the microsome. Its subcellular location is the nucleus. The catalysed reaction is an alcohol + 3'-phosphoadenylyl sulfate = an alkyl sulfate + adenosine 3',5'-bisphosphate + H(+). The enzyme catalyses pregnenolone + 3'-phosphoadenylyl sulfate = pregnenolone sulfate + adenosine 3',5'-bisphosphate + H(+). It carries out the reaction 3beta-hydroxyandrost-5-en-17-one + 3'-phosphoadenylyl sulfate = dehydroepiandrosterone 3-sulfate + adenosine 3',5'-bisphosphate + H(+). It catalyses the reaction cholesterol + 3'-phosphoadenylyl sulfate = cholesterol sulfate + adenosine 3',5'-bisphosphate + H(+). Sulfotransferase that utilizes 3'-phospho-5'-adenylyl sulfate (PAPS) as sulfonate donor to catalyze the sulfate conjugation. Preferentially sulfonates cholesterol. Catalyzes sulfation of the 3beta-hydroxyl groups of steroids, such as, pregnenolone and dehydroepiandrosterone (DHEA). Cholesterol sulfation is approximately 10-fold higher than for pregnenolone and 20-fold higher than for DHEA. Plays a role in epidermal cholesterol metabolism and in the regulation of epidermal proliferation and differentiation. Functionally, strongly sulfonates pregnenolone, however is capable to sulfonate cholesterol with a high degree of efficiency. DHEA is a relatively poor substrate. The sequence is that of Sulfotransferase 2B1 (Sult2b1) from Mus musculus (Mouse).